The following is an 876-amino-acid chain: Paramyosin (876 aa).

The tract at residues 1–28 is nonhelical region; sequence MSARSAKFMYRSGNAGASGDLSVEYGTD. A coiled-coil region spans residues 29-855; the sequence is LGALTRLEDK…IRAKHRSWVT (827 aa). The segment at 856–876 is nonhelical region; sequence TSQVPGGTRQVFVTQEEQSNY.

This sequence belongs to the paramyosin family. As to quaternary structure, homodimer.

It localises to the cytoplasm. The protein localises to the myofibril. Functionally, paramyosin is a major structural component of many thick filaments isolated from invertebrate muscles. The chain is Paramyosin from Sarcoptes scabiei (Itch mite).